Reading from the N-terminus, the 1830-residue chain is Urea amidolyase (1830 aa).

ATP-binding positions include 115–122, K740, E823, and N858; that span reads GAIVIGKT. A Biotin carboxylation domain is found at 625 to 1068; that stretch reads PFETVLIANR…ATKILDSYDY (444 aa). Residues 744–941 enclose the ATP-grasp domain; that stretch reads REIAEKAGVP…LVEWMLRIAA (198 aa). Positions 1752–1830 constitute a Biotinyl-binding domain; that stretch reads AVEEEYPEDA…DAGDLVAVIQ (79 aa). Position 1796 is an N6-biotinyllysine (K1796).

Belongs to the DUR1,2 family. As to quaternary structure, monomer. Biotin is required as a cofactor.

It catalyses the reaction urea + hydrogencarbonate + ATP = urea-1-carboxylate + ADP + phosphate + H(+). The catalysed reaction is urea-1-carboxylate + H2O + 3 H(+) = 2 NH4(+) + 2 CO2. Its pathway is nitrogen metabolism; urea degradation; CO(2) and NH(3) from urea (allophanate route): step 1/2. It participates in nitrogen metabolism; urea degradation; CO(2) and NH(3) from urea (allophanate route): step 2/2. Its function is as follows. Involved in uracil catabolism. Hydrolysis of urea to ammonia and CO(2). The chain is Urea amidolyase (DUR1,2) from Lachancea kluyveri (Yeast).